The chain runs to 198 residues: Density-regulated protein (198 aa).

The disordered stretch occupies residues 76 to 110 (QETGTVEGQATSGEEEEKKKQKRGGRGQIKQKKKT). Over residues 77 to 87 (ETGTVEGQATS) the composition is skewed to polar residues. Positions 95 to 110 (KQKRGGRGQIKQKKKT) are enriched in basic residues. Residues 115 to 182 (ITIAKIPRAK…DIIDVIQEKW (68 aa)) enclose the SUI1 domain.

It belongs to the DENR family.

May be involved in the translation of target mRNAs by scanning and recognition of the initiation codon. Involved in translation initiation; promotes recruitment of aminoacetyled initiator tRNA to P site of 40S ribosomes. Can promote release of deacylated tRNA and mRNA from recycled 40S subunits following ABCE1-mediated dissociation of post-termination ribosomal complexes into subunits. This Xenopus laevis (African clawed frog) protein is Density-regulated protein (denr).